We begin with the raw amino-acid sequence, 350 residues long: uncharacterized protein (350 aa).

A signal peptide spans 1–27; sequence MKNKKRVLIASSLSCAILLLSAATTQA. A disordered region spans residues 28–71; sequence NSAHKDSQDQNKKEHVDKSQQKEKRNVTNKDKNSTVPDDIGKNG. Residues 30-60 show a composition bias toward basic and acidic residues; sequence AHKDSQDQNKKEHVDKSQQKEKRNVTNKDKN.

Belongs to the aerolysin family.

This is an uncharacterized protein from Staphylococcus aureus (strain MSSA476).